Reading from the N-terminus, the 432-residue chain is Glutamate--cysteine ligase EgtA (432 aa).

Belongs to the glutamate--cysteine ligase type 2 family. EgtA subfamily.

It carries out the reaction L-cysteine + L-glutamate + ATP = gamma-L-glutamyl-L-cysteine + ADP + phosphate + H(+). It functions in the pathway amino-acid biosynthesis; ergothioneine biosynthesis. Its function is as follows. Catalyzes the synthesis of gamma-glutamylcysteine (gamma-GC) which is used as substrate for the biosynthesis of the low-molecular thiol compound ergothioneine (ERG). ERG is one of the major redox buffers which protects bacteria against redox stressors and antibiotics; loss of ERG or mycothiol (MSH, the other major redox buffer in this bacteria) leads to respiratory alterations and bioenergetic deficiencies that negatively impact virulence. The chain is Glutamate--cysteine ligase EgtA (egtA) from Mycobacterium tuberculosis (strain CDC 1551 / Oshkosh).